Consider the following 536-residue polypeptide: Chaperonin GroEL (536 aa).

ATP-binding positions include 29–32 (TLGP), 86–90 (DGTTT), glycine 412, and aspartate 493.

Belongs to the chaperonin (HSP60) family. As to quaternary structure, forms a cylinder of 14 subunits composed of two heptameric rings stacked back-to-back. Interacts with the co-chaperonin GroES.

Its subcellular location is the cytoplasm. It carries out the reaction ATP + H2O + a folded polypeptide = ADP + phosphate + an unfolded polypeptide.. Its function is as follows. Together with its co-chaperonin GroES, plays an essential role in assisting protein folding. The GroEL-GroES system forms a nano-cage that allows encapsulation of the non-native substrate proteins and provides a physical environment optimized to promote and accelerate protein folding. The sequence is that of Chaperonin GroEL from Aster yellows witches'-broom phytoplasma (strain AYWB).